Here is a 370-residue protein sequence, read N- to C-terminus: Cathepsin B-like cysteine proteinase 3 (370 aa).

The first 16 residues, 1–16 (MLKVYFLALFLAGCSA), serve as a signal peptide directing secretion. Residues 17 to 91 (FVLDEIRGIN…FVRGEIVPEP (75 aa)) constitute a propeptide that is removed on maturation. 6 disulfide bridges follow: Cys-105–Cys-134, Cys-117–Cys-162, Cys-153–Cys-210, Cys-154–Cys-158, Cys-190–Cys-214, and Cys-198–Cys-202. The active site involves Cys-120. Asn-138 carries an N-linked (GlcNAc...) asparagine glycan. Residues His-284 and Asn-304 contribute to the active site.

This sequence belongs to the peptidase C1 family.

The protein is Cathepsin B-like cysteine proteinase 3 (cpr-3) of Caenorhabditis elegans.